The chain runs to 517 residues: Quinol oxidase subunit 1 (517 aa).

12 helical membrane-spanning segments follow: residues 19 to 39 (VVWL…IAAM), 64 to 84 (IHGW…VIGF), 98 to 118 (QMAI…AGSP), 150 to 170 (MAYL…VTLI), 185 to 205 (IFAA…PALA), 226 to 246 (WAIL…FPLF), 271 to 291 (IYLL…TWPL), 303 to 323 (TLIL…TIFT), 333 to 353 (VGMG…QALV), 369 to 389 (VVGH…TTVF), 412 to 432 (IGMI…SVAG), and 460 to 480 (IGIP…LAYA). Histidine 65 provides a ligand contact to Fe(II)-heme a. 4 residues coordinate Cu cation: histidine 235, tyrosine 239, histidine 284, and histidine 285. The 1'-histidyl-3'-tyrosine (His-Tyr) cross-link spans 235 to 239 (HPVVY). Position 372 (histidine 372) interacts with heme a3. Histidine 374 is a binding site for Fe(II)-heme a.

It belongs to the heme-copper respiratory oxidase family.

Its subcellular location is the cell membrane. The enzyme catalyses 2 a quinol + O2 = 2 a quinone + 2 H2O. In terms of biological role, catalyzes the reduction of oxygen to water. Subunits I, II and III form the functional core of the enzyme complex. Electrons originating in caldariella quinol are transferred to the binuclear center formed by heme A3 and Cu(B). Functionally, subunit I binds heme a and the bimetallic center. The chain is Quinol oxidase subunit 1 (soxB) from Sulfolobus acidocaldarius (strain ATCC 33909 / DSM 639 / JCM 8929 / NBRC 15157 / NCIMB 11770).